The sequence spans 148 residues: MSAKFIDKVKYFIGLDAFEDDNEDMLEEADGMDDEMIPISSTSKKNKILNIHTTTQMKVVIFEPSSFEEAPGIVDNLKNRKPVIINLENIEPDLAKKFFDFLNGAIYALDGNIQKVASGIFILAPNNVDISGNIKEELKNKGVFPWQK.

The protein belongs to the SepF family. As to quaternary structure, homodimer. Interacts with FtsZ.

The protein localises to the cytoplasm. Functionally, cell division protein that is part of the divisome complex and is recruited early to the Z-ring. Probably stimulates Z-ring formation, perhaps through the cross-linking of FtsZ protofilaments. Its function overlaps with FtsA. This is Cell division protein SepF from Alkaliphilus metalliredigens (strain QYMF).